We begin with the raw amino-acid sequence, 533 residues long: Tyrosine-protein kinase transforming protein Fps (533 aa).

Residues 1–46 (ASGQLHRPQPQEHTSTSAAAGTWRHTQASESRHRLPHCSAAPSHQD) form a disordered region. The span at 11–29 (QEHTSTSAAAGTWRHTQAS) shows a compositional bias: polar residues. The region spanning 50–124 (MGFGPELWCP…LQEDRQSVCS (75 aa)) is the F-BAR; degenerate domain. The SH2 domain maps to 171 to 260 (WYHGAIPRSE…KSGIVLTRAV (90 aa)). One can recognise a Protein kinase domain in the interval 272–525 (VLLGERIGRG…PSFGAVHQDL (254 aa)). ATP is bound by residues 278–286 (IGRGNFGEV) and K301. The active-site Proton acceptor is D394. The residue at position 424 (Y424) is a Phosphotyrosine; by autocatalysis.

This sequence belongs to the protein kinase superfamily. Tyr protein kinase family. Fes/fps subfamily.

The catalysed reaction is L-tyrosyl-[protein] + ATP = O-phospho-L-tyrosyl-[protein] + ADP + H(+). This Gallus gallus (Chicken) protein is Tyrosine-protein kinase transforming protein Fps (V-FPS).